Reading from the N-terminus, the 303-residue chain is Peroxisomal trans-2-enoyl-CoA reductase (303 aa).

Residue 23-47 (VTGGATGIGKAIVKELLELGSNVVI) participates in NADP(+) binding. An N6-succinyllysine modification is found at K32. S49 bears the Phosphoserine mark. Y179 (proton acceptor) is an active-site residue. Residue Y179 is modified to Phosphotyrosine. A Microbody targeting signal motif is present at residues 301–303 (AKL).

Belongs to the short-chain dehydrogenases/reductases (SDR) family. As to quaternary structure, interacts with PEX5, probably required to target it into peroxisomes.

It localises to the peroxisome. It catalyses the reaction a (2E)-enoyl-CoA + NADPH + H(+) = a 2,3-saturated acyl-CoA + NADP(+). The catalysed reaction is (2E)-hexenoyl-CoA + NADPH + H(+) = hexanoyl-CoA + NADP(+). The enzyme catalyses (2E)-octenoyl-CoA + NADPH + H(+) = octanoyl-CoA + NADP(+). It carries out the reaction (2E)-decenoyl-CoA + NADPH + H(+) = decanoyl-CoA + NADP(+). It catalyses the reaction (2E)-dodecenoyl-CoA + NADPH + H(+) = dodecanoyl-CoA + NADP(+). The catalysed reaction is (2E)-tetradecenoyl-CoA + NADPH + H(+) = tetradecanoyl-CoA + NADP(+). It functions in the pathway lipid metabolism; fatty acid biosynthesis. Its function is as follows. Participates in chain elongation of fatty acids. Catalyzes the reduction of trans-2-enoyl-CoAs of varying chain lengths from 6:1 to 16:1, having maximum activity with 10:1 CoA. Has no 2,4-dienoyl-CoA reductase activity. The polypeptide is Peroxisomal trans-2-enoyl-CoA reductase (PECR) (Pongo abelii (Sumatran orangutan)).